We begin with the raw amino-acid sequence, 186 residues long: Large ribosomal subunit protein uL5 (186 aa).

It belongs to the universal ribosomal protein uL5 family. Part of the 50S ribosomal subunit; part of the 5S rRNA/L5/L18/L25 subcomplex. Contacts the 5S rRNA and the P site tRNA. Forms a bridge to the 30S subunit in the 70S ribosome.

Its function is as follows. This is one of the proteins that bind and probably mediate the attachment of the 5S RNA into the large ribosomal subunit, where it forms part of the central protuberance. In the 70S ribosome it contacts protein S13 of the 30S subunit (bridge B1b), connecting the 2 subunits; this bridge is implicated in subunit movement. Contacts the P site tRNA; the 5S rRNA and some of its associated proteins might help stabilize positioning of ribosome-bound tRNAs. The protein is Large ribosomal subunit protein uL5 of Cereibacter sphaeroides (strain ATCC 17023 / DSM 158 / JCM 6121 / CCUG 31486 / LMG 2827 / NBRC 12203 / NCIMB 8253 / ATH 2.4.1.) (Rhodobacter sphaeroides).